We begin with the raw amino-acid sequence, 728 residues long: Phosphoribosylformylglycinamidine synthase subunit PurL (728 aa).

Histidine 42 is a catalytic residue. Residues tyrosine 45 and lysine 84 each contribute to the ATP site. Residue glutamate 86 participates in Mg(2+) binding. Residues 87-90 (SHNH) and arginine 109 contribute to the substrate site. The active-site Proton acceptor is histidine 88. Aspartate 110 is a Mg(2+) binding site. Residue glutamine 237 participates in substrate binding. Mg(2+) is bound at residue aspartate 265. Residue 309–311 (ESQ) coordinates substrate. Residues aspartate 491 and glycine 528 each coordinate ATP. Asparagine 529 contacts Mg(2+). Serine 531 is a substrate binding site.

This sequence belongs to the FGAMS family. In terms of assembly, monomer. Part of the FGAM synthase complex composed of 1 PurL, 1 PurQ and 2 PurS subunits.

Its subcellular location is the cytoplasm. The catalysed reaction is N(2)-formyl-N(1)-(5-phospho-beta-D-ribosyl)glycinamide + L-glutamine + ATP + H2O = 2-formamido-N(1)-(5-O-phospho-beta-D-ribosyl)acetamidine + L-glutamate + ADP + phosphate + H(+). It functions in the pathway purine metabolism; IMP biosynthesis via de novo pathway; 5-amino-1-(5-phospho-D-ribosyl)imidazole from N(2)-formyl-N(1)-(5-phospho-D-ribosyl)glycinamide: step 1/2. Its function is as follows. Part of the phosphoribosylformylglycinamidine synthase complex involved in the purines biosynthetic pathway. Catalyzes the ATP-dependent conversion of formylglycinamide ribonucleotide (FGAR) and glutamine to yield formylglycinamidine ribonucleotide (FGAM) and glutamate. The FGAM synthase complex is composed of three subunits. PurQ produces an ammonia molecule by converting glutamine to glutamate. PurL transfers the ammonia molecule to FGAR to form FGAM in an ATP-dependent manner. PurS interacts with PurQ and PurL and is thought to assist in the transfer of the ammonia molecule from PurQ to PurL. In Campylobacter jejuni subsp. jejuni serotype O:2 (strain ATCC 700819 / NCTC 11168), this protein is Phosphoribosylformylglycinamidine synthase subunit PurL.